We begin with the raw amino-acid sequence, 276 residues long: Halorhodopsin (276 aa).

A propeptide spanning residues 1-21 (MTAVSTTATTVLQATQSDVLQ) is cleaved from the precursor. The Extracellular segment spans residues 22–25 (EIQS). Residues 26–51 (NFLLNSSIWVNIALAGVVILLFVAMG) form a helical membrane-spanning segment. The Cytoplasmic segment spans residues 52–57 (RDLESP). A helical transmembrane segment spans residues 58–81 (RAKLIWVATMLVPLVSISSYAGLA). At 82 to 105 (SGLTVGFLQMPPGHALAGQEVLSP) the chain is on the extracellular side. A helical membrane pass occupies residues 106 to 127 (WGRYLTWTFSTPMILLALGLLA). At 128 to 130 (DTD) the chain is on the cytoplasmic side. A helical membrane pass occupies residues 131–154 (IASLFTAITMDIGMCVTGLAAALI). The Extracellular portion of the chain corresponds to 155 to 157 (TSS). A helical membrane pass occupies residues 158-180 (HLLRWVFYGISCAFFVAVLYVLL). The Cytoplasmic segment spans residues 181–192 (VQWPADAEAAGT). The chain crosses the membrane as a helical span at residues 193–216 (SEIFGTLKILTVVLWLGYPILWAL). The Extracellular segment spans residues 217-225 (GSEGVALLS). The chain crosses the membrane as a helical span at residues 226-254 (VGVTSWGYSGLDILAKYVFAFLLLRWVAA). K241 bears the N6-(retinylidene)lysine mark. Residues 255-276 (NEGTVSGSGMGIGSGGAAPADD) are Cytoplasmic-facing.

It belongs to the archaeal/bacterial/fungal opsin family.

Its subcellular location is the cell membrane. Its function is as follows. Light-driven anion pump. The protein is Halorhodopsin of Halobacterium halobium (strain shark).